The chain runs to 178 residues: UPF0114 protein HPSH_00970 (178 aa).

4 helical membrane-spanning segments follow: residues 15-35, 54-74, 102-122, and 145-165; these read WLLA…GYVF, LVLS…VLMV, FNAL…IFLL, and PIFW…LAAV.

The protein belongs to the UPF0114 family.

It is found in the cell membrane. This chain is UPF0114 protein HPSH_00970, found in Helicobacter pylori (strain Shi470).